Reading from the N-terminus, the 278-residue chain is Biotin synthase (278 aa).

A Radical SAM core domain is found at 1 to 227 (MQIMLCAISN…QSVVMVAGGR (227 aa)). 3 residues coordinate [4Fe-4S] cluster: C16, C20, and C23. The [2Fe-2S] cluster site is built by C60, C95, and C153.

This sequence belongs to the radical SAM superfamily. Biotin synthase family. Homodimer. The cofactor is [4Fe-4S] cluster. It depends on [2Fe-2S] cluster as a cofactor.

The catalysed reaction is (4R,5S)-dethiobiotin + (sulfur carrier)-SH + 2 reduced [2Fe-2S]-[ferredoxin] + 2 S-adenosyl-L-methionine = (sulfur carrier)-H + biotin + 2 5'-deoxyadenosine + 2 L-methionine + 2 oxidized [2Fe-2S]-[ferredoxin]. It functions in the pathway cofactor biosynthesis; biotin biosynthesis; biotin from 7,8-diaminononanoate: step 2/2. Catalyzes the conversion of dethiobiotin (DTB) to biotin by the insertion of a sulfur atom into dethiobiotin via a radical-based mechanism. The chain is Biotin synthase from Campylobacter jejuni subsp. jejuni serotype O:6 (strain 81116 / NCTC 11828).